We begin with the raw amino-acid sequence, 451 residues long: Phenylalanine--tRNA ligase, mitochondrial (451 aa).

Residues 157–160, arginine 179, 186–188, and 193–195 each bind substrate; these read SAHQ, QHY, and QLE. Lysine 202 bears the N6-acetyllysine mark. Glutamate 287 and phenylalanine 312 together coordinate substrate. Positions 358-450 constitute an FDX-ACB domain; it reads SKYPAVINDI…AVQLLGVEGR (93 aa).

The protein belongs to the class-II aminoacyl-tRNA synthetase family. As to quaternary structure, monomer.

The protein resides in the mitochondrion matrix. It localises to the mitochondrion. It carries out the reaction tRNA(Phe) + L-phenylalanine + ATP = L-phenylalanyl-tRNA(Phe) + AMP + diphosphate + H(+). In terms of biological role, is responsible for the charging of tRNA(Phe) with phenylalanine in mitochondrial translation. To a lesser extent, also catalyzes direct attachment of m-Tyr (an oxidized version of Phe) to tRNA(Phe), thereby opening the way for delivery of the misacylated tRNA to the ribosome and incorporation of ROS-damaged amino acid into proteins. This is Phenylalanine--tRNA ligase, mitochondrial (FARS2) from Homo sapiens (Human).